Here is an 805-residue protein sequence, read N- to C-terminus: Cell division cycle 5-related protein (805 aa).

2 HTH myb-type domains span residues 1-58 (MPRI…DPSI) and 59-108 (KKTE…DQAQ). DNA-binding regions (H-T-H motif) lie at residues 31–54 (WSRIASLLHRKSAKQCKARWYEWL) and 82–104 (WRTIAPLIGRTAAQCLERYEYLL). Residues 108-127 (QAKEGDKDEGDDPRKLRPGE) show a composition bias toward basic and acidic residues. Disordered stretches follow at residues 108–143 (QAKEGDKDEGDDPRKLRPGEIDPNPETKPARPDPID), 246–293 (HLEG…HVKK), 409–442 (LSTPYRTPGEGSGSTPRQGMTPRGAIGTPSQRSV), and 530–556 (LERRRRSQAVQRELPRPSNVNTSVLRP). A coiled-coil region spans residues 142-193 (IDMDEDELEMLSEARARLANTQGKKAKRKAREKQLEEARRLAALQKRRELRA). The span at 246-274 (HLEGKMRDEIEQQERKKDKERMKKKKESD) shows a compositional bias: basic and acidic residues. 2 coiled-coil regions span residues 511–542 (EDAADIDERALALRAKQEELERRRRSQAVQRE) and 678–804 (YTRA…SKLQ).

This sequence belongs to the CEF1 family. In terms of assembly, component of the precatalytic, catalytic and postcatalytic spliceosome complexes.

It is found in the nucleus. It localises to the cytoplasm. Functionally, DNA-binding protein involved in cell cycle control. May act as a transcription activator. Plays a role in pre-mRNA splicing as core component of precatalytic, catalytic and postcatalytic spliceosomal complexes. May also play a role in the response to DNA damage (DDR). In Nematostella vectensis (Starlet sea anemone), this protein is Cell division cycle 5-related protein (cdc5l).